We begin with the raw amino-acid sequence, 249 residues long: ATP synthase subunit a (249 aa).

Helical transmembrane passes span phenylalanine 26–leucine 46, phenylalanine 84–phenylalanine 104, isoleucine 114–tryptophan 134, leucine 143–isoleucine 163, isoleucine 185–alanine 205, and alanine 208–leucine 228.

It belongs to the ATPase A chain family. In terms of assembly, F-type ATPases have 2 components, CF(1) - the catalytic core - and CF(0) - the membrane proton channel. CF(1) has five subunits: alpha(3), beta(3), gamma(1), delta(1), epsilon(1). CF(0) has three main subunits: a(1), b(2) and c(9-12). The alpha and beta chains form an alternating ring which encloses part of the gamma chain. CF(1) is attached to CF(0) by a central stalk formed by the gamma and epsilon chains, while a peripheral stalk is formed by the delta and b chains.

It is found in the cell inner membrane. In terms of biological role, key component of the proton channel; it plays a direct role in the translocation of protons across the membrane. The chain is ATP synthase subunit a from Chelativorans sp. (strain BNC1).